The sequence spans 154 residues: 6,7-dimethyl-8-ribityllumazine synthase (154 aa).

Residues Phe21, Ala55–Glu57, and Cys79–Ile81 each bind 5-amino-6-(D-ribitylamino)uracil. Ala84–Thr85 serves as a coordination point for (2S)-2-hydroxy-3-oxobutyl phosphate. Residue His87 is the Proton donor of the active site. Phe111 provides a ligand contact to 5-amino-6-(D-ribitylamino)uracil. (2S)-2-hydroxy-3-oxobutyl phosphate is bound at residue Arg125.

Belongs to the DMRL synthase family. Forms an icosahedral capsid composed of 60 subunits, arranged as a dodecamer of pentamers.

It carries out the reaction (2S)-2-hydroxy-3-oxobutyl phosphate + 5-amino-6-(D-ribitylamino)uracil = 6,7-dimethyl-8-(1-D-ribityl)lumazine + phosphate + 2 H2O + H(+). It functions in the pathway cofactor biosynthesis; riboflavin biosynthesis; riboflavin from 2-hydroxy-3-oxobutyl phosphate and 5-amino-6-(D-ribitylamino)uracil: step 1/2. Its function is as follows. Catalyzes the formation of 6,7-dimethyl-8-ribityllumazine by condensation of 5-amino-6-(D-ribitylamino)uracil with 3,4-dihydroxy-2-butanone 4-phosphate. This is the penultimate step in the biosynthesis of riboflavin. The chain is 6,7-dimethyl-8-ribityllumazine synthase from Macrococcus caseolyticus (strain JCSC5402) (Macrococcoides caseolyticum).